Consider the following 309-residue polypeptide: Methionyl-tRNA formyltransferase (309 aa).

112–115 (SLLP) is a (6S)-5,6,7,8-tetrahydrofolate binding site.

Belongs to the Fmt family.

The enzyme catalyses L-methionyl-tRNA(fMet) + (6R)-10-formyltetrahydrofolate = N-formyl-L-methionyl-tRNA(fMet) + (6S)-5,6,7,8-tetrahydrofolate + H(+). Attaches a formyl group to the free amino group of methionyl-tRNA(fMet). The formyl group appears to play a dual role in the initiator identity of N-formylmethionyl-tRNA by promoting its recognition by IF2 and preventing the misappropriation of this tRNA by the elongation apparatus. The polypeptide is Methionyl-tRNA formyltransferase (Bartonella tribocorum (strain CIP 105476 / IBS 506)).